Here is a 218-residue protein sequence, read N- to C-terminus: Probable WRKY transcription factor 12 (218 aa).

A compositionally biased stretch (low complexity) spans 49 to 63; it reads SSLSSPSFPIHNSSS. 2 disordered regions span residues 49-120 and 199-218; these read SSLS…DMKN and HNHIPSDDSTSPDHDCLSSF. Over residues 64-77 the composition is skewed to polar residues; it reads TTTTHAPLGFSNNL. The segment covering 105–116 has biased composition (low complexity); it reads SNSWWRSNSGSG. The segment at residues 139–204 is a DNA-binding region (WRKY); sequence SDVDVLDDGY…YEGRHNHIPS (66 aa).

Belongs to the WRKY group II-c family.

The protein resides in the nucleus. Its function is as follows. Transcription factor. Interacts specifically with the W box (5'-(T)TGAC[CT]-3'), a frequently occurring elicitor-responsive cis-acting element. This is Probable WRKY transcription factor 12 (WRKY12) from Arabidopsis thaliana (Mouse-ear cress).